We begin with the raw amino-acid sequence, 437 residues long: Vasoactive intestinal polypeptide receptor 2 (437 aa).

The signal sequence occupies residues 1–22 (MRASVVLTCYCWLLVRVSSIHP). Topologically, residues 23–123 (ECRFHLEIQE…EDESKISFYI (101 aa)) are extracellular. Cystine bridges form between Cys-37–Cys-60, Cys-51–Cys-92, and Cys-74–Cys-108. N-linked (GlcNAc...) asparagine glycans are attached at residues Asn-57, Asn-87, and Asn-91. The helical transmembrane segment at 124-149 (LVKAIYTLGYSVSLMSLTTGSIIICL) threads the bilayer. Topologically, residues 150-157 (FRKLHCTR) are cytoplasmic. Residues 158–179 (NYIHLNLFLSFMLRAISVLVKD) traverse the membrane as a helical segment. Over 180–202 (SVLYSSSGLLRCHDQPASWVGCK) the chain is Extracellular. A disulfide bridge links Cys-201 with Cys-270. A helical membrane pass occupies residues 203 to 227 (LSLVFFQYCIMANFYWLLVEGLYLH). Residues 228–238 (TLLVAILPPSR) are Cytoplasmic-facing. Residues 239–260 (CFLAYLLIGWGIPSVCIGAWTA) traverse the membrane as a helical segment. Residues 261–279 (TRLSLEDTGCWDTNDHSIP) lie on the Extracellular side of the membrane. A helical membrane pass occupies residues 280 to 303 (WWVIRMPILISIVVNFALFISIVR). Residues 304-324 (ILLQKLTSPDVGGNDQSQYKR) lie on the Cytoplasmic side of the membrane. The chain crosses the membrane as a helical span at residues 325 to 345 (LAKSTLLLIPLFGVHYMVFAA). The Extracellular portion of the chain corresponds to 346-353 (FPIGISST). The chain crosses the membrane as a helical span at residues 354 to 377 (YQILFELCVGSFQGLVVAVLYCFL). The Cytoplasmic segment spans residues 378 to 437 (NSEVQCELKRRWRGLCLTQAGSRDYRLHSWSMSRNGSESALQIHRGSRTQSFLQSETSVI).

This sequence belongs to the G-protein coupled receptor 2 family. As to quaternary structure, interacts with ADCYAP1/PACAP (via N-terminal extracellular domain); activated by PACAP27 and CAPAC38 neuropeptides. Interacts with VIP; the interaction results in VIPR1 activation. In terms of tissue distribution, expressed at high levels in the MIN6 cells, at moderate levels in pancreatic islets, insulin-secreting cells, lung, brain, stomach, and colon, and at low levels in the heart.

It localises to the cell membrane. G protein-coupled receptor activated by the neuropeptides vasoactive intestinal peptide (VIP) and pituitary adenylate cyclase-activating polypeptide (ADCYAP1/PACAP). Binds VIP and both PACAP27 and PACAP38 bioactive peptides with the order of ligand affinity of VIP = PACAP38 &gt; PACAP27. Ligand binding causes a conformation change that triggers signaling via guanine nucleotide-binding proteins (G proteins) and modulates the activity of downstream effectors. Activates cAMP-dependent pathway. May be coupled to phospholipase C. This chain is Vasoactive intestinal polypeptide receptor 2, found in Mus musculus (Mouse).